Here is a 358-residue protein sequence, read N- to C-terminus: S-adenosylmethionine:tRNA ribosyltransferase-isomerase (358 aa).

It belongs to the QueA family. In terms of assembly, monomer.

The protein localises to the cytoplasm. It carries out the reaction 7-aminomethyl-7-carbaguanosine(34) in tRNA + S-adenosyl-L-methionine = epoxyqueuosine(34) in tRNA + adenine + L-methionine + 2 H(+). The protein operates within tRNA modification; tRNA-queuosine biosynthesis. Functionally, transfers and isomerizes the ribose moiety from AdoMet to the 7-aminomethyl group of 7-deazaguanine (preQ1-tRNA) to give epoxyqueuosine (oQ-tRNA). This is S-adenosylmethionine:tRNA ribosyltransferase-isomerase from Desulfotalea psychrophila (strain LSv54 / DSM 12343).